A 334-amino-acid polypeptide reads, in one-letter code: DNA-directed RNA polymerase subunit alpha (334 aa).

The tract at residues 1–233 (MADQTISNVL…NLFTPLVSQE (233 aa)) is alpha N-terminal domain (alpha-NTD). The interval 263–334 (DNENSYNLYN…QLKKRFKIQL (72 aa)) is alpha C-terminal domain (alpha-CTD).

Belongs to the RNA polymerase alpha chain family. As to quaternary structure, in plastids the minimal PEP RNA polymerase catalytic core is composed of four subunits: alpha, beta, beta', and beta''. When a (nuclear-encoded) sigma factor is associated with the core the holoenzyme is formed, which can initiate transcription.

The protein localises to the plastid. It localises to the chloroplast. The enzyme catalyses RNA(n) + a ribonucleoside 5'-triphosphate = RNA(n+1) + diphosphate. In terms of biological role, DNA-dependent RNA polymerase catalyzes the transcription of DNA into RNA using the four ribonucleoside triphosphates as substrates. In Chaetosphaeridium globosum (Charophycean green alga), this protein is DNA-directed RNA polymerase subunit alpha.